Consider the following 121-residue polypeptide: Ribonuclease P protein component (121 aa).

It belongs to the RnpA family. As to quaternary structure, consists of a catalytic RNA component (M1 or rnpB) and a protein subunit.

The catalysed reaction is Endonucleolytic cleavage of RNA, removing 5'-extranucleotides from tRNA precursor.. Functionally, RNaseP catalyzes the removal of the 5'-leader sequence from pre-tRNA to produce the mature 5'-terminus. It can also cleave other RNA substrates such as 4.5S RNA. The protein component plays an auxiliary but essential role in vivo by binding to the 5'-leader sequence and broadening the substrate specificity of the ribozyme. In Geobacillus kaustophilus (strain HTA426), this protein is Ribonuclease P protein component.